Consider the following 280-residue polypeptide: Cycloeucalenol cycloisomerase (280 aa).

Helical transmembrane passes span 22 to 42, 53 to 73, 89 to 109, 167 to 187, 201 to 221, and 244 to 264; these read LFFL…VVPY, YLLL…LLVG, ANLW…HYFF, FEAA…TIAI, MYRV…PMFF, and AMLV…IVPL.

It is found in the membrane. The catalysed reaction is cycloeucalenol = obtusifoliol. Converts pentacyclic cyclopropyl sterols to tetracyclic sterols. This is Cycloeucalenol cycloisomerase (CPI1) from Arabidopsis thaliana (Mouse-ear cress).